A 180-amino-acid chain; its full sequence is Pyruvate synthase subunit PorC (180 aa).

In terms of assembly, heterotetramer of one alpha, one beta, one delta and one gamma chain.

It carries out the reaction 2 oxidized [2Fe-2S]-[ferredoxin] + pyruvate + CoA = 2 reduced [2Fe-2S]-[ferredoxin] + acetyl-CoA + CO2 + H(+). The protein is Pyruvate synthase subunit PorC (porC) of Methanothermobacter thermautotrophicus (strain ATCC 29096 / DSM 1053 / JCM 10044 / NBRC 100330 / Delta H) (Methanobacterium thermoautotrophicum).